A 697-amino-acid polypeptide reads, in one-letter code: Polyribonucleotide nucleotidyltransferase (697 aa).

Positions 486 and 492 each coordinate Mg(2+). The region spanning 553–612 (PRIHTIKIHPDKIKDVIGKCGSVIRALTEETKTIIDIEDDGTVTVAATDSIKAQQAICRI) is the KH domain. Residues 622 to 690 (GSIYHGKVTR…RQGRIRLSMK (69 aa)) form the S1 motif domain.

It belongs to the polyribonucleotide nucleotidyltransferase family. Component of the RNA degradosome, which is a multiprotein complex involved in RNA processing and mRNA degradation. It depends on Mg(2+) as a cofactor.

Its subcellular location is the cytoplasm. It catalyses the reaction RNA(n+1) + phosphate = RNA(n) + a ribonucleoside 5'-diphosphate. Its function is as follows. Involved in mRNA degradation. Catalyzes the phosphorolysis of single-stranded polyribonucleotides processively in the 3'- to 5'-direction. The protein is Polyribonucleotide nucleotidyltransferase of Baumannia cicadellinicola subsp. Homalodisca coagulata.